The chain runs to 355 residues: Small ribosomal subunit protein uS2 (355 aa).

The protein belongs to the universal ribosomal protein uS2 family.

The sequence is that of Small ribosomal subunit protein uS2 from Methylobacterium radiotolerans (strain ATCC 27329 / DSM 1819 / JCM 2831 / NBRC 15690 / NCIMB 10815 / 0-1).